The primary structure comprises 92 residues: Small ribosomal subunit protein uS19 (92 aa).

This sequence belongs to the universal ribosomal protein uS19 family.

In terms of biological role, protein S19 forms a complex with S13 that binds strongly to the 16S ribosomal RNA. This Psychromonas ingrahamii (strain DSM 17664 / CCUG 51855 / 37) protein is Small ribosomal subunit protein uS19.